The primary structure comprises 231 residues: Cytidylate kinase (231 aa).

Position 11–19 (11–19 (GHSSCGKST)) interacts with ATP.

The protein belongs to the cytidylate kinase family. Type 1 subfamily.

It is found in the cytoplasm. It carries out the reaction CMP + ATP = CDP + ADP. It catalyses the reaction dCMP + ATP = dCDP + ADP. The protein is Cytidylate kinase of Porphyromonas gingivalis (strain ATCC BAA-308 / W83).